The following is a 207-amino-acid chain: MIQGTLYIVSAPSGAGKSSLIQALLKTQPLYDTQVSVSHTTRAMRPGENQGEHYFFITEEAFRQMIDNNEFLEHARVFDNYYGTSRKVIEETLASGVDVFLDIDWQGAQQIRKKMPSARSIFILPPSKEELCRRLRGRGQDSEDIIEKRMDQAVAEMVHYNEYDYLIVNDDFNTALADLHTIIRSERLHRERQAQRHDALISKLLAD.

Residues 4–184 (GTLYIVSAPS…ALADLHTIIR (181 aa)) enclose the Guanylate kinase-like domain. 11 to 18 (APSGAGKS) provides a ligand contact to ATP.

Belongs to the guanylate kinase family.

It localises to the cytoplasm. It carries out the reaction GMP + ATP = GDP + ADP. Essential for recycling GMP and indirectly, cGMP. This chain is Guanylate kinase, found in Photorhabdus laumondii subsp. laumondii (strain DSM 15139 / CIP 105565 / TT01) (Photorhabdus luminescens subsp. laumondii).